Consider the following 185-residue polypeptide: Peptide deformylase (185 aa).

Residues Cys-94 and His-136 each contribute to the Fe cation site. Glu-137 is an active-site residue. His-140 lines the Fe cation pocket.

This sequence belongs to the polypeptide deformylase family. It depends on Fe(2+) as a cofactor.

It catalyses the reaction N-terminal N-formyl-L-methionyl-[peptide] + H2O = N-terminal L-methionyl-[peptide] + formate. Functionally, removes the formyl group from the N-terminal Met of newly synthesized proteins. Requires at least a dipeptide for an efficient rate of reaction. N-terminal L-methionine is a prerequisite for activity but the enzyme has broad specificity at other positions. The polypeptide is Peptide deformylase (Chlorobium limicola (strain DSM 245 / NBRC 103803 / 6330)).